Here is a 1057-residue protein sequence, read N- to C-terminus: Carbamoyl phosphate synthase large chain (1057 aa).

The segment at 1 to 401 is carboxyphosphate synthetic domain; the sequence is MPKREDINKI…ATQKAIRSLD (401 aa). Residues Arg-129, Arg-169, Gly-175, Gly-176, Gln-208, Ile-210, Glu-215, Gly-241, Ile-242, His-243, Gln-284, and Glu-298 each coordinate ATP. An ATP-grasp 1 domain is found at 133-327; that stretch reads RALMNDLNEP…IAKVAAKIAV (195 aa). Mg(2+) is bound by residues Gln-284, Glu-298, and Asn-300. Residues Gln-284, Glu-298, and Asn-300 each coordinate Mn(2+). Positions 402–546 are oligomerization domain; the sequence is IDINYIGDEE…YSTYELENES (145 aa). The interval 547–929 is carbamoyl phosphate synthetic domain; it reads IVSNRKSIVV…ALYKAFEGAK (383 aa). Residues 671 to 861 form the ATP-grasp 2 domain; sequence NKLIQANGIR…MARLATRAIL (191 aa). The ATP site is built by Arg-707, Gln-746, Leu-748, Glu-752, Gly-777, Val-778, His-779, Ser-780, Gln-820, and Glu-832. Mg(2+) contacts are provided by Gln-820, Glu-832, and Asn-834. Mn(2+)-binding residues include Gln-820, Glu-832, and Asn-834. The 128-residue stretch at 930-1057 folds into the MGS-like domain; the sequence is MHMPDHGKVL…ESQAFTTLHL (128 aa). The interval 930-1057 is allosteric domain; that stretch reads MHMPDHGKVL…ESQAFTTLHL (128 aa).

It belongs to the CarB family. Composed of two chains; the small (or glutamine) chain promotes the hydrolysis of glutamine to ammonia, which is used by the large (or ammonia) chain to synthesize carbamoyl phosphate. Tetramer of heterodimers (alpha,beta)4. Mg(2+) is required as a cofactor. Requires Mn(2+) as cofactor.

It carries out the reaction hydrogencarbonate + L-glutamine + 2 ATP + H2O = carbamoyl phosphate + L-glutamate + 2 ADP + phosphate + 2 H(+). The enzyme catalyses hydrogencarbonate + NH4(+) + 2 ATP = carbamoyl phosphate + 2 ADP + phosphate + 2 H(+). The protein operates within amino-acid biosynthesis; L-arginine biosynthesis; carbamoyl phosphate from bicarbonate: step 1/1. Its pathway is pyrimidine metabolism; UMP biosynthesis via de novo pathway; (S)-dihydroorotate from bicarbonate: step 1/3. In terms of biological role, large subunit of the glutamine-dependent carbamoyl phosphate synthetase (CPSase). CPSase catalyzes the formation of carbamoyl phosphate from the ammonia moiety of glutamine, carbonate, and phosphate donated by ATP, constituting the first step of 2 biosynthetic pathways, one leading to arginine and/or urea and the other to pyrimidine nucleotides. The large subunit (synthetase) binds the substrates ammonia (free or transferred from glutamine from the small subunit), hydrogencarbonate and ATP and carries out an ATP-coupled ligase reaction, activating hydrogencarbonate by forming carboxy phosphate which reacts with ammonia to form carbamoyl phosphate. This chain is Carbamoyl phosphate synthase large chain, found in Pediococcus pentosaceus (strain ATCC 25745 / CCUG 21536 / LMG 10740 / 183-1w).